The primary structure comprises 509 residues: Maturase K (509 aa).

It belongs to the intron maturase 2 family. MatK subfamily.

It is found in the plastid. The protein resides in the chloroplast. Its function is as follows. Usually encoded in the trnK tRNA gene intron. Probably assists in splicing its own and other chloroplast group II introns. The protein is Maturase K of Opuntia quimilo (Cactus).